The sequence spans 1028 residues: Ubiquitin conjugation factor E4 A (1028 aa).

The interval 33 to 57 (KEQLKQQSDELPASPDDSDNSVSES) is disordered. N6-acetyllysine is present on lysine 386. One can recognise a U-box domain in the interval 949-1023 (DACDEFLDPI…QRWLAERKQQ (75 aa)).

Belongs to the ubiquitin conjugation factor E4 family. As to expression, expressed in liver, heart, brain, kidney and testis.

Its subcellular location is the cytoplasm. The enzyme catalyses S-ubiquitinyl-[E2 ubiquitin-conjugating enzyme]-L-cysteine + [acceptor protein]-L-lysine = [E2 ubiquitin-conjugating enzyme]-L-cysteine + N(6)-ubiquitinyl-[acceptor protein]-L-lysine.. It functions in the pathway protein modification; protein ubiquitination. Its function is as follows. Ubiquitin-protein ligase that probably functions as an E3 ligase in conjunction with specific E1 and E2 ligases. May also function as an E4 ligase mediating the assembly of polyubiquitin chains on substrates ubiquitinated by another E3 ubiquitin ligase. Mediates 'Lys-48'-linked polyubiquitination of substrates. The sequence is that of Ubiquitin conjugation factor E4 A from Mus musculus (Mouse).